The chain runs to 204 residues: Large ribosomal subunit protein uL10 (204 aa).

The tract at residues 170–204 (AADPSVIGGAGEASDQEPKTTETPEASAAQDNTNE) is disordered. The span at 192-204 (TPEASAAQDNTNE) shows a compositional bias: polar residues.

The protein belongs to the universal ribosomal protein uL10 family. Part of the ribosomal stalk of the 50S ribosomal subunit. The N-terminus interacts with L11 and the large rRNA to form the base of the stalk. The C-terminus forms an elongated spine to which L12 dimers bind in a sequential fashion forming a multimeric L10(L12)X complex.

Its function is as follows. Forms part of the ribosomal stalk, playing a central role in the interaction of the ribosome with GTP-bound translation factors. The sequence is that of Large ribosomal subunit protein uL10 from Cutibacterium acnes (strain DSM 16379 / KPA171202) (Propionibacterium acnes).